We begin with the raw amino-acid sequence, 219 residues long: Phosphoribosylformylglycinamidine synthase subunit PurQ (219 aa).

The Glutamine amidotransferase type-1 domain maps to 2–219 (KIAVITFPGS…KVVLDLILGS (218 aa)). Cysteine 86 serves as the catalytic Nucleophile. Residues histidine 195 and glutamate 197 contribute to the active site.

In terms of assembly, part of the FGAM synthase complex composed of 1 PurL, 1 PurQ and 2 PurS subunits.

The protein localises to the cytoplasm. It catalyses the reaction N(2)-formyl-N(1)-(5-phospho-beta-D-ribosyl)glycinamide + L-glutamine + ATP + H2O = 2-formamido-N(1)-(5-O-phospho-beta-D-ribosyl)acetamidine + L-glutamate + ADP + phosphate + H(+). The enzyme catalyses L-glutamine + H2O = L-glutamate + NH4(+). It functions in the pathway purine metabolism; IMP biosynthesis via de novo pathway; 5-amino-1-(5-phospho-D-ribosyl)imidazole from N(2)-formyl-N(1)-(5-phospho-D-ribosyl)glycinamide: step 1/2. Part of the phosphoribosylformylglycinamidine synthase complex involved in the purines biosynthetic pathway. Catalyzes the ATP-dependent conversion of formylglycinamide ribonucleotide (FGAR) and glutamine to yield formylglycinamidine ribonucleotide (FGAM) and glutamate. The FGAM synthase complex is composed of three subunits. PurQ produces an ammonia molecule by converting glutamine to glutamate. PurL transfers the ammonia molecule to FGAR to form FGAM in an ATP-dependent manner. PurS interacts with PurQ and PurL and is thought to assist in the transfer of the ammonia molecule from PurQ to PurL. The polypeptide is Phosphoribosylformylglycinamidine synthase subunit PurQ (Leptospira interrogans serogroup Icterohaemorrhagiae serovar copenhageni (strain Fiocruz L1-130)).